A 209-amino-acid polypeptide reads, in one-letter code: Large ribosomal subunit protein uL3 (209 aa).

An N5-methylglutamine modification is found at Q150.

Belongs to the universal ribosomal protein uL3 family. Part of the 50S ribosomal subunit. Forms a cluster with proteins L14 and L19. In terms of processing, methylated by PrmB.

Its function is as follows. One of the primary rRNA binding proteins, it binds directly near the 3'-end of the 23S rRNA, where it nucleates assembly of the 50S subunit. This is Large ribosomal subunit protein uL3 from Vibrio campbellii (strain ATCC BAA-1116).